Here is a 308-residue protein sequence, read N- to C-terminus: Mycothiol acetyltransferase (308 aa).

2 consecutive N-acetyltransferase domains span residues 8–155 and 160–308; these read RDVD…PRLR and VQVR…RRAR. Glutamate 39 contacts 1D-myo-inositol 2-(L-cysteinylamino)-2-deoxy-alpha-D-glucopyranoside. 84–86 lines the acetyl-CoA pocket; sequence LVV. 1D-myo-inositol 2-(L-cysteinylamino)-2-deoxy-alpha-D-glucopyranoside contacts are provided by glutamate 187, lysine 226, and glutamate 240. Acetyl-CoA contacts are provided by residues 244-246 and 251-257; these read LGI and QGLGLGR. Tyrosine 278 lines the 1D-myo-inositol 2-(L-cysteinylamino)-2-deoxy-alpha-D-glucopyranoside pocket.

This sequence belongs to the acetyltransferase family. MshD subfamily. As to quaternary structure, monomer.

The catalysed reaction is 1D-myo-inositol 2-(L-cysteinylamino)-2-deoxy-alpha-D-glucopyranoside + acetyl-CoA = mycothiol + CoA + H(+). In terms of biological role, catalyzes the transfer of acetyl from acetyl-CoA to desacetylmycothiol (Cys-GlcN-Ins) to form mycothiol. This chain is Mycothiol acetyltransferase, found in Geodermatophilus obscurus (strain ATCC 25078 / DSM 43160 / JCM 3152 / CCUG 61914 / KCC A-0152 / KCTC 9177 / NBRC 13315 / NRRL B-3577 / G-20).